A 496-amino-acid chain; its full sequence is RNA-binding motif protein, Y chromosome, family 1 member A1 (496 aa).

The RRM domain maps to 8 to 85 (GKLFIGGLNR…KAIKVEQAKK (78 aa)). Disordered regions lie at residues 78–349 (IKVE…HRDY) and 452–496 (KDQR…SSRY). Composition is skewed to low complexity over residues 97–114 (PASS…SARG) and 149–159 (PVKRGPSSRSG). Positions 175-184 (NSWMGSQGPM) are enriched in polar residues. Basic and acidic residues-rich tracts occupy residues 204-214 (RNDRMSTRHDG), 242-253 (DNGHSNRDEHSS), 276-289 (AYRD…DESY), 313-326 (GYRD…HESY), 335-349 (SSRE…HRDY), and 484-496 (GESR…SSRY).

As to quaternary structure, interacts with splicing factor proteins SFRS3/SRP20, TRA2B/SFRS10, KHDRBS1/SAM68 and KHDRBS3. In terms of tissue distribution, testis-specific.

The protein localises to the nucleus. Its function is as follows. RNA-binding protein involved in pre-mRNA splicing. Required for sperm development. Acts additively with TRA2B to promote exon 7 inclusion of the survival motor neuron SMN. Binds non-specifically to mRNAs. In Homo sapiens (Human), this protein is RNA-binding motif protein, Y chromosome, family 1 member A1 (RBMY1A1).